Reading from the N-terminus, the 556-residue chain is (S)-N-methylcanadine 1-hydroxylase CYP82Y1 (556 aa).

The helical transmembrane segment at 18–38 (TAVGTLILAFLLTLSPVIIYY) threads the bilayer. Cysteine 500 serves as a coordination point for heme.

This sequence belongs to the cytochrome P450 family. Heme serves as cofactor. In terms of tissue distribution, highly expressed in capsules. Expressed is stems.

It is found in the membrane. The catalysed reaction is (S)-cis-N-methylcanadine + reduced [NADPH--hemoprotein reductase] + O2 = (S)-1-hydroxy-N-methylcanadine + oxidized [NADPH--hemoprotein reductase] + H2O + H(+). The protein operates within alkaloid biosynthesis. In terms of biological role, cytochrome P450 involved in the biosynthesis of the benzylisoquinoline alkaloid noscapine. Converts (S)-N-methylcanadine to (S)-1-hydroxy-N-methylcanadine. In Papaver somniferum (Opium poppy), this protein is (S)-N-methylcanadine 1-hydroxylase CYP82Y1.